The chain runs to 650 residues: XK-related protein 4 (650 aa).

A compositionally biased stretch (basic and acidic residues) spans 1–15 (MAAKSDGRLKMKKSS). The interval 1–44 (MAAKSDGRLKMKKSSDVAFTPLQNSDHSGSVQGLAPGLPSGSGA) is disordered. Residues 21-31 (PLQNSDHSGSV) are compositionally biased toward polar residues. A run of 2 helical transmembrane segments spans residues 114-134 (WILA…WLAV) and 144-164 (WFGL…VFSF). Residue serine 200 is modified to Phosphoserine. The segment at 200–238 (SAAGEGEARPSTPQRQASNASKSNIAAANSGSNSSGATR) is disordered. The span at 216-238 (ASNASKSNIAAANSGSNSSGATR) shows a compositional bias: low complexity. The next 8 helical transmembrane spans lie at 248–268 (CSFC…GQIW), 306–326 (HLLA…CIIV), 331–351 (LQAL…WALA), 365–385 (KPIS…TIAA), 396–418 (VFQL…WIVH), 428–448 (WEEI…WFNV), 457–477 (LFIY…LWYL), and 487–507 (FAIP…VFML).

The protein belongs to the XK family. As to quaternary structure, homodimer; homodimerization takes place upon caspase cleavage. Interacts with the processed C-terminus of XRCC4 (protein XRCC4, C-terminus); interaction promotes the phospholipid scramblase activity. In terms of processing, undergoes proteolytic processing by caspase-3 (CASP3), caspase-6 (CASP6) and caspase-7 (CASP7) to generate the XK-related protein 4, processed form, leading to its activation.

Its subcellular location is the cell membrane. It catalyses the reaction a 1,2-diacyl-sn-glycero-3-phospho-L-serine(in) = a 1,2-diacyl-sn-glycero-3-phospho-L-serine(out). Its activity is regulated as follows. Phospholipid scramblase activity is activated upon caspase cleavage to generate the XK-related protein 4, processed form. Does not act prior the onset of apoptosis. With respect to regulation, homodimerizes upon caspase cleavage. Phospholipid scramblase activity is activated following interaction with the processed C-terminus of XRCC4 (protein XRCC4, C-terminus). Phospholipid scramblase that promotes phosphatidylserine exposure on apoptotic cell surface. Phosphatidylserine is a specific marker only present at the surface of apoptotic cells and acts as a specific signal for engulfment. This Homo sapiens (Human) protein is XK-related protein 4.